The chain runs to 553 residues: CTP synthase (553 aa).

Residues 1–270 (MTKYVFVTGG…DRLICEELRL (270 aa)) form an amidoligase domain region. Residue serine 13 coordinates CTP. Position 13 (serine 13) interacts with UTP. Residues 14–19 (SLGKGI) and aspartate 71 contribute to the ATP site. Mg(2+) contacts are provided by aspartate 71 and glutamate 144. CTP-binding positions include 151-153 (DIE), 191-196 (KTKPTQ), and lysine 227. UTP contacts are provided by residues 191-196 (KTKPTQ) and lysine 227. One can recognise a Glutamine amidotransferase type-1 domain in the interval 295 to 547 (TIGMVGKYVD…VQAALACQQT (253 aa)). Glycine 356 contributes to the L-glutamine binding site. The active-site Nucleophile; for glutamine hydrolysis is the cysteine 383. L-glutamine is bound by residues 384–387 (LGMQ), glutamate 407, and arginine 473. Active-site residues include histidine 520 and glutamate 522.

The protein belongs to the CTP synthase family. Homotetramer.

The enzyme catalyses UTP + L-glutamine + ATP + H2O = CTP + L-glutamate + ADP + phosphate + 2 H(+). The catalysed reaction is L-glutamine + H2O = L-glutamate + NH4(+). It catalyses the reaction UTP + NH4(+) + ATP = CTP + ADP + phosphate + 2 H(+). It functions in the pathway pyrimidine metabolism; CTP biosynthesis via de novo pathway; CTP from UDP: step 2/2. Allosterically activated by GTP, when glutamine is the substrate; GTP has no effect on the reaction when ammonia is the substrate. The allosteric effector GTP functions by stabilizing the protein conformation that binds the tetrahedral intermediate(s) formed during glutamine hydrolysis. Inhibited by the product CTP, via allosteric rather than competitive inhibition. In terms of biological role, catalyzes the ATP-dependent amination of UTP to CTP with either L-glutamine or ammonia as the source of nitrogen. Regulates intracellular CTP levels through interactions with the four ribonucleotide triphosphates. In Burkholderia mallei (strain NCTC 10247), this protein is CTP synthase.